The following is a 317-amino-acid chain: D-alanine--D-alanine ligase (317 aa).

The 200-residue stretch at 104-303 folds into the ATP-grasp domain; that stretch reads KRVWLQHGLP…YAELCVAILA (200 aa). 130 to 185 lines the ATP pocket; it reads PDRLGLPLILKPPHEGSTVGITKVAACADMEQAYAAASHFDEVVLAEQFVRGRELT. Mg(2+) contacts are provided by Asp257, Glu270, and Asn272.

This sequence belongs to the D-alanine--D-alanine ligase family. Requires Mg(2+) as cofactor. It depends on Mn(2+) as a cofactor.

It localises to the cytoplasm. The catalysed reaction is 2 D-alanine + ATP = D-alanyl-D-alanine + ADP + phosphate + H(+). It functions in the pathway cell wall biogenesis; peptidoglycan biosynthesis. In terms of biological role, cell wall formation. The sequence is that of D-alanine--D-alanine ligase from Bordetella avium (strain 197N).